Consider the following 1081-residue polypeptide: Inversin (1081 aa).

ANK repeat units lie at residues 13 to 42 (SLAS…ALKD), 47 to 76 (FGRT…DVNK), 80 to 110 (SQRT…WMQK), 113 to 144 (EEMT…EVDT), 148 to 177 (NKQT…NIGI), 181 to 213 (EGKI…TESL), 220 to 250 (EGRT…NITS), 254 to 283 (LFRT…SGTI), 288 to 317 (QGAT…VKDD), 321 to 350 (EGRT…DIDI), 356 to 385 (YGGT…QVDA), 389 to 418 (MKHT…RVDL), 422 to 451 (DGHS…NPNV), 455 to 484 (AGRT…DPNI), 488 to 517 (EGRT…FPNQ), and 523 to 553 (ERYT…SIAA). Position 75 is a 3-hydroxyasparagine (N75). The short motif at 490-498 (RTALHWSCN) is the D-box 1 element. Residues 555 to 584 (QDIAAFKIQAVYKGYKVRKAFRDRKNLLMK) form the IQ 1 domain. The span at 589–610 (RKDAAAKKREEENKRREAEQQK) shows a compositional bias: basic and acidic residues. The disordered stretch occupies residues 589-889 (RKDAAAKKRE…PAPGPLSGQS (301 aa)). Over residues 638–649 (RAPSKQPPSSEA) the composition is skewed to polar residues. Basic and acidic residues-rich tracts occupy residues 688–698 (KPNESPREQCK), 724–740 (EKSR…DKGK), and 772–785 (DGHR…DTAS). The segment covering 863–872 (SGTSTLSEDA) has biased composition (polar residues). The short motif at 910-918 (RKELFRKKN) is the D-box 2 element. The region spanning 917–946 (KNKAAAVIQRAWRSYQLRKHLSHLLHMKEL) is the IQ 2 domain. The ANK 17 repeat unit spans residues 1022 to 1050 (RTHSVLHLNSVSNLQCIHLLENSGRSKNF). Polar residues predominate over residues 1051 to 1061 (SYNLQSATPPK). A disordered region spans residues 1051–1081 (SYNLQSATPPKTKTKLRPSLEEECVRGSWNS).

As to quaternary structure, binds calmodulin via its IQ domains. Interacts with APC2. Interacts with alpha-, beta-, and gamma-catenin. Interacts with N-cadherin (CDH2). Interacts with NPHP1. Interacts with DVL1, PRICKLE (PRICKLE1 or PRICKLE2) and Strabismus (VANGL1 or VANGL2). Component of a complex containing at least ANKS6, INVS, NEK8 and NPHP3. ANKS6 may organize complex assembly by linking INVS and NPHP3 to NEK8 and INVS may target the complex to the proximal ciliary axoneme. Interacts with IQCB1; the interaction likely requires additional interactors. Interacts with microtubules. In terms of processing, may be ubiquitinated via its interaction with APC2. Hydroxylated at Asn-75, most probably by HIF1AN.

The protein resides in the cytoplasm. It localises to the cytoskeleton. Its subcellular location is the membrane. The protein localises to the spindle. It is found in the nucleus. Its function is as follows. Required for normal renal development and establishment of left-right axis. Probably acts as a molecular switch between different Wnt signaling pathways. Inhibits the canonical Wnt pathway by targeting cytoplasmic disheveled (DVL1) for degradation by the ubiquitin-proteasome. This suggests that it is required in renal development to oppose the repression of terminal differentiation of tubular epithelial cells by Wnt signaling. Involved in the organization of apical junctions in kidney cells together with NPHP1, NPHP4 and RPGRIP1L/NPHP8. Does not seem to be strictly required for ciliogenesis. This chain is Inversin (INVS), found in Canis lupus familiaris (Dog).